Consider the following 952-residue polypeptide: MSKTPPKFLFYLGNFTACMFGMTPAVYSLQTDSLEKFALERDEEFRTSFPLLDSLSTLTGFSPITTFVGNRHNSSQDIVLSNYKSIDNILLLWTSAGGAVSCNNFLLSNVEDHAFFSKNLAIGTGGAIACQGACTITKNRGPLIFFSNRGLNNASTGGETRGGAIACNGDFTISQNQGTFYFVNNSVNNWGGALSTNGHCRIQSNRAPLLFFNNTAPSGGGALRSENTTISDNTRPIYFKNNCGNNGGAIQTSVTVAIKNNSGSVIFNNNTALSGSINSGNGSGGAIYTTNLSIDDNPGTILFNNNYCIRDGGAICTQFLTIKNSGHVYFTNNQGNWGGALMLLQDSTCLLFAEQGNIAFQNNEVFLTTFGRYNAIHCTPNSNLQLGANKGYTTAFFDPIEHQHPTTNPLIFNPNANHQGTILFSSAYIPEASDYENNFISSSKNTSELRNGVLSIEDRAGWQFYKFTQKGGILKLGHAASIATTANSETPSTSVGSQVIINNLAINLPSILAKGKAPTLWIRPLQSSAPFTEDNNPTITLSGPLTLLNEENRDPYDSIDLSEPLQNIHLLSLSDVTARHINTDNFHPESLNATEHYGYQGIWSPYWVETITTTNNASIETANTLYRALYANWTPLGYKVNPEYQGDLATTPLWQSFHTMFSLLRSYNRTGDSDIERPFLEIQGIADGLFVHQNSIPGAPGFRIQSTGYSLQASSETSLHQKISLGFAQFFTRTKEIGSSNNVSAHNTVSSLYVELPWFQEAFATSTVLAYGYGDHHLHSLHPSHQEQAEGTCYSHTLAAAIGCSFPWQQKSYLHLSPFVQAIAIRSHQTAFEEIGDNPRKFVSQKPFYNLTLPLGIQGKWQSKFHVPTEWTLELSYQPVLYQQNPQIGVTLLASGGSWDILGHNYVRNALGYKVHNQTALFRSLDLFLDYQGSVSSSTSTHHLQAGSTLKF.

Residues 1-27 form the signal peptide; sequence MSKTPPKFLFYLGNFTACMFGMTPAVY. In terms of domain architecture, Autotransporter spans 646–952; the sequence is GDLATTPLWQ…HLQAGSTLKF (307 aa).

This sequence belongs to the PMP outer membrane protein family.

It is found in the secreted. It localises to the cell wall. The protein resides in the cell outer membrane. This chain is Probable outer membrane protein pmp16 (pmp16), found in Chlamydia pneumoniae (Chlamydophila pneumoniae).